A 610-amino-acid chain; its full sequence is MAFYDDSGADSQPFGRPQKPYEGGIVGPRRPRLVTDYGSSLVQWMRTRRPRYKGGHRMETERPSASYIVDMLPPLARIHSPVDTIPVRHLHQSIGKSKKPITVVRWTPEGRRLLTGGHTGEFMLWNGTAFNFETVMDAHYDQLQAGVTSLAWSHSHDWLISGGQKGDIKYWRPNFNNVETIDDAHHDAVRDLAWSPSDTKFLSASDDTTLKIFDFTSRTADTVLTGHNWDVKSCDWHPTKGLLVSGSKDHQVKFWDPRTARCLTTLHSHKNTVTATRFSRVNQNLLATSSRDQTARVFDLRMMRDICILRGHEKPVSSLTWHPIHSSLISTGSEDGSLYHYLLDEPNVPSGQIPTIAPYDSPDPANTPAQVIYPAHRVQYAHSATIWSLDWHPLGHILASGSKDNFTRFWSRARPGETSYMKDRFHIGEEAAEAQGTWSRGFGRRQMREEEEQELQDEAESLVDQRKPTGSVLPGIQIAPPGGTPHNDGLGSQLLPGIGAPQPPPAPSAGIPSSMPQMDPNRLAALLSTQGAPQPNSIPPNTGFPGFPMLPALSGTPPANVDLAELQKQLMSQGIPLPQNFAPQHFSPLPGTGGLPGLQGSNTPDNPYGR.

The tract at residues 1–29 (MAFYDDSGADSQPFGRPQKPYEGGIVGPR) is disordered. WD repeat units lie at residues 96-135 (KSKK…FETV), 142-182 (QLQA…ETID), 184-223 (AHHD…ADTV), 226-265 (GHNW…CLTT), 268-308 (SHKN…DICI), 311-351 (GHEK…VPSG), and 381-420 (AHSA…ETSY). Disordered regions lie at residues 480-519 (PPGG…PQMD) and 574-610 (GIPL…PYGR). Positions 601 to 610 (SNTPDNPYGR) are enriched in polar residues.

The protein localises to the nucleus. Its function is as follows. Required for 3'-end cleavage and polyadenylation of pre-mRNAs. Also involved in chromosome segregation where it has a role in chromosome attachment to the mitotic spindle. This Aspergillus oryzae (strain ATCC 42149 / RIB 40) (Yellow koji mold) protein is Polyadenylation factor subunit 2 (pfs2).